The chain runs to 237 residues: MHLLIPAAGMGRRMGSDRNKLRLMLHGKPLLAWTLLAAESSISISWIGIIGQLEDEPTWETLLNTLSLNKPVVFIEGGQTRQESVYNGLQALPPEAEQVLIHDGARCLATPELLDRCAHALHKYQGFVAAVPVKDTIKVVDTTHQIQGTPDRSQLWAAQTPQGFQVVPLKKCHEQGRQQGWEVTDDAALFEKLDLPVHIVVGEETNLKVTTPADLAIAELILEQRLQKNSQTDGFGS.

It belongs to the IspD/TarI cytidylyltransferase family. IspD subfamily.

It catalyses the reaction 2-C-methyl-D-erythritol 4-phosphate + CTP + H(+) = 4-CDP-2-C-methyl-D-erythritol + diphosphate. The protein operates within isoprenoid biosynthesis; isopentenyl diphosphate biosynthesis via DXP pathway; isopentenyl diphosphate from 1-deoxy-D-xylulose 5-phosphate: step 2/6. Its function is as follows. Catalyzes the formation of 4-diphosphocytidyl-2-C-methyl-D-erythritol from CTP and 2-C-methyl-D-erythritol 4-phosphate (MEP). The chain is 2-C-methyl-D-erythritol 4-phosphate cytidylyltransferase from Acaryochloris marina (strain MBIC 11017).